The chain runs to 434 residues: Serine hydroxymethyltransferase 1 (434 aa).

(6S)-5,6,7,8-tetrahydrofolate contacts are provided by residues L136 and 140–142; that span reads GHL. K245 carries the post-translational modification N6-(pyridoxal phosphate)lysine.

This sequence belongs to the SHMT family. Homodimer. Requires pyridoxal 5'-phosphate as cofactor.

It is found in the cytoplasm. It carries out the reaction (6R)-5,10-methylene-5,6,7,8-tetrahydrofolate + glycine + H2O = (6S)-5,6,7,8-tetrahydrofolate + L-serine. The protein operates within one-carbon metabolism; tetrahydrofolate interconversion. Its pathway is amino-acid biosynthesis; glycine biosynthesis; glycine from L-serine: step 1/1. Catalyzes the reversible interconversion of serine and glycine with tetrahydrofolate (THF) serving as the one-carbon carrier. This reaction serves as the major source of one-carbon groups required for the biosynthesis of purines, thymidylate, methionine, and other important biomolecules. Also exhibits THF-independent aldolase activity toward beta-hydroxyamino acids, producing glycine and aldehydes, via a retro-aldol mechanism. The protein is Serine hydroxymethyltransferase 1 of Rhodospirillum rubrum (strain ATCC 11170 / ATH 1.1.1 / DSM 467 / LMG 4362 / NCIMB 8255 / S1).